We begin with the raw amino-acid sequence, 327 residues long: Arabinose 5-phosphate isomerase KdsD (327 aa).

The region spanning 41–183 is the SIS domain; sequence ILENNRDKSR…AIALLKAKNF (143 aa). Residues 74 to 75, His81, His87, 113 to 122, 147 to 149, Thr221, and Glu273 each bind substrate; these read GT, GLLPMIKHLD, and HVD. His81 is a Zn(2+) binding site. The 60-residue stretch at 209–268 folds into the CBS 1 domain; sequence MRKGNEIPIVKPTDNIRKAILEISDKGVGNTLVAENNTLLGIFTDGDLRRMFEAESFNSQ. The 53-residue stretch at 275 to 327 folds into the CBS 2 domain; it reads MTKNPKSISKEEMAITALEKMEKYEITSLAVVDNGHNILGIVTMHDLIKLELR.

Belongs to the SIS family. GutQ/KpsF subfamily. Homotetramer.

It catalyses the reaction D-arabinose 5-phosphate = D-ribulose 5-phosphate. Its pathway is carbohydrate biosynthesis; 3-deoxy-D-manno-octulosonate biosynthesis; 3-deoxy-D-manno-octulosonate from D-ribulose 5-phosphate: step 1/3. The protein operates within bacterial outer membrane biogenesis; lipopolysaccharide biosynthesis. Its activity is regulated as follows. Inhibited by hydroxamates, mimicking the putative enediol reaction intermediate. Most potent inhibition, with an IC(50) of 0.7 uM, is obtained with the 4 carbon-based hydroxamate containing acetyl moieties. Functionally, involved in the biosynthesis of 3-deoxy-D-manno-octulosonate (KDO), a unique 8-carbon sugar component of lipopolysaccharides (LPSs). Catalyzes the reversible aldol-ketol isomerization between D-ribulose 5-phosphate (Ru5P) and D-arabinose 5-phosphate (A5P). The chain is Arabinose 5-phosphate isomerase KdsD (kdsD) from Francisella tularensis subsp. tularensis (strain SCHU S4 / Schu 4).